Consider the following 348-residue polypeptide: MPLFKRRDGSGPAPNATIREKYDFRDVLGTGAFSKVFLAESKSDAGQMYAVKCIDKKALKGKEESLENEIKVLRKLRHNNIVQLFDTYDEKQFVYLVMELVTGGELFDRIVAKGSYTEQDASNLIRQVLEAVGFMHDNGVVHRDLKPENLLYYNQDEDSKIMISDFGLSKTEDSGVMATACGTPGYVAPEVLQQKPYGKAVDVWSIGVIAYILLCGYPPFYDESDANLFAQIIKGEYEFDAPYWDQISDSAKDFITHLMCCDPEARFTCQDALSHPWISGNTAYTHDIHGTVAVHLKKSLAKRNWKKAYNAAAAIRQLQMLRLSSNSNRLQKQASQQQPEPPTPAFHA.

A Nuclear localization signal 1 motif is present at residues 7–22; that stretch reads RDGSGPAPNATIREKY. A Protein kinase domain is found at 22-278; the sequence is YDFRDVLGTG…CQDALSHPWI (257 aa). Residues 28 to 36 and Lys52 each bind ATP; that span reads LGTGAFSKV. The Nuclear localization signal 2 motif lies at 71-78; the sequence is KVLRKLRH. Asp144 functions as the Proton acceptor in the catalytic mechanism. Thr179 is subject to Phosphothreonine; by ckk-1. The autoinhibitory domain stretch occupies residues 278–318; it reads ISGNTAYTHDIHGTVAVHLKKSLAKRNWKKAYNAAAAIRQL. A Nuclear export sequence motif is present at residues 288-294; the sequence is IHGTVAV. The Nuclear localization signal 3 signature appears at 297–307; the sequence is KKSLAKRNWKK. The calmodulin-binding stretch occupies residues 298 to 319; sequence KSLAKRNWKKAYNAAAAIRQLQ. A compositionally biased stretch (polar residues) spans 327 to 338; sequence SNRLQKQASQQQ. The disordered stretch occupies residues 327–348; sequence SNRLQKQASQQQPEPPTPAFHA. Pro residues predominate over residues 339–348; sequence PEPPTPAFHA.

The protein belongs to the protein kinase superfamily. CAMK Ser/Thr protein kinase family. CaMK subfamily. As to quaternary structure, interacts with importin ima-3; affinity for ima-3 is increased in the presence of Ca(2+) and calmodulin and leads to increased nuclear accumulation of cmk-1 in FLP neurons upon prolonged heat activation. Requires Mg(2+) as cofactor. In terms of processing, phosphorylation at Thr-179 can promote both nuclear export and import, sustaining nucleocytoplasmic shuttling. In terms of tissue distribution, expressed in head and tail neurons and vulval muscles. Throughout the nervous system. Detected in neurites and neuronal cell bodies. Expressed in the mechanosensory neurons, AVM and ALM, and in the interneurons, AVA, AVB and AVD. Expressed in the right and left ASE neurons where it functions cell-autonomously to control salt-avoidance learning. Expressed in FLP and AFD thermosensory neurons.

Its subcellular location is the nucleus. The protein localises to the cytoplasm. The catalysed reaction is L-seryl-[protein] + ATP = O-phospho-L-seryl-[protein] + ADP + H(+). The enzyme catalyses L-threonyl-[protein] + ATP = O-phospho-L-threonyl-[protein] + ADP + H(+). Activated by Ca(2+)/calmodulin. Binding of calmodulin results in a conformational change that generates functional binding sites for both substrate and ATP, and thus relieves autoinhibition and lowers the Km of substrate binding. Must be phosphorylated by ckk-1 to be maximally active but this does not appear to be required for activity in AFD neurons. Calcium/calmodulin-dependent protein kinase that operates in the calcium-triggered CaMKK-CaMK1 signaling cascade which results in transcriptional activation. Transcriptional activation occurs at least in part through phosphorylation of crh-1. Regulates gene expression, sensory morphology, and function of the AFD thermosensory neurons. Involved in long-term adaptation of AFD neurons to temperatures warmer than the initial acclimatized cultivation temperature. Acts in the FLP thermal nociceptors to moderate the responsiveness to noxious heat and controls neuropeptide release from FLP neurons in response to temperature elevations. Regulates the dauer decision, the decision of the larvae to enter into the alternative stress-resistant and long-lived dauer developmental stage, based on the feeding state, primarily in the AWC sensory neurons. Acts non cell-autonomously in the AWC neurons to regulate expression of the daf-28 insulin-like peptide and cell-autonomously in the ASI sensory neurons to regulate expression of the growth promoting daf-7 in a food-regulated manner. Plays a role in memory-based thermal response of an individual AFD neuron cell. Influences habituation and sensitivity to repeated mechanosensory stimuli. Involved in chemotaxis response in AWC neurons to attractant 2-heptanone, a volatile organic compound emitted by the nematode pathogenic bacterium B.nematocida B16. Acts in the ASE salt-sensing neurons to promote a type of aversive gustatory-associated learning called salt-avoidance learning via regulation of crh-1 signaling and the promotion of long-term memory formation, but is not involved in salt attraction. Represses transcription of glutamate receptor glr-1 in the nucleus basally and in response to changes in synaptic activity. The protein is Calcium/calmodulin-dependent protein kinase type 1 of Caenorhabditis elegans.